We begin with the raw amino-acid sequence, 407 residues long: Argininosuccinate synthase (407 aa).

ATP contacts are provided by residues 16–24 and alanine 44; that span reads AYSGGLDTS. L-citrulline is bound by residues tyrosine 96 and serine 101. Glycine 126 is a binding site for ATP. Residues threonine 128, asparagine 132, and aspartate 133 each coordinate L-aspartate. Asparagine 132 lines the L-citrulline pocket. L-citrulline is bound by residues arginine 136, serine 185, serine 194, glutamate 270, and tyrosine 282.

It belongs to the argininosuccinate synthase family. Type 1 subfamily. In terms of assembly, homotetramer.

It is found in the cytoplasm. The enzyme catalyses L-citrulline + L-aspartate + ATP = 2-(N(omega)-L-arginino)succinate + AMP + diphosphate + H(+). Its pathway is amino-acid biosynthesis; L-arginine biosynthesis; L-arginine from L-ornithine and carbamoyl phosphate: step 2/3. This is Argininosuccinate synthase from Shewanella denitrificans (strain OS217 / ATCC BAA-1090 / DSM 15013).